The sequence spans 132 residues: Small ribosomal subunit protein uS8 (132 aa).

It belongs to the universal ribosomal protein uS8 family. In terms of assembly, part of the 30S ribosomal subunit. Contacts proteins S5 and S12.

In terms of biological role, one of the primary rRNA binding proteins, it binds directly to 16S rRNA central domain where it helps coordinate assembly of the platform of the 30S subunit. This Saccharopolyspora erythraea (strain ATCC 11635 / DSM 40517 / JCM 4748 / NBRC 13426 / NCIMB 8594 / NRRL 2338) protein is Small ribosomal subunit protein uS8.